The primary structure comprises 372 residues: Tomoregulin-1 (372 aa).

An N-terminal signal peptide occupies residues 1 to 36 (MGAQAPLRLPAAPPLAVCGYTSVLLLFAFCLPGSRA). Residues 37–322 (SNQPAGGGGD…VPSRQKLTHV (286 aa)) lie on the Extracellular side of the membrane. Asn55 carries an N-linked (GlcNAc...) asparagine glycan. The Kazal-like 1 domain maps to 90 to 137 (ACQFQCHTNYIPVCGSNGDTYQNECFLRRAACKHQKDITVVARGPCYS). 3 disulfide bridges follow: Cys91–Cys121, Cys95–Cys114, and Cys103–Cys135. Asn139 is a glycosylation site (N-linked (GlcNAc...) asparagine). The tract at residues 139-161 (NGSGSGEGEEEGSGAGAHRKHSK) is disordered. A Kazal-like 2 domain is found at 181–229 (VCNIDCSGYSFNPVCASDGSSYNNPCFVREASCIKQEQIDIRHLGHCTD). Disulfide bonds link Cys182–Cys213, Cys186–Cys206, Cys195–Cys227, Cys267–Cys280, Cys275–Cys291, and Cys293–Cys302. Residues 263–303 (SHMPCPENLNGYCIHGKCEFIYSTQKASCRCESGYTGQHCE) enclose the EGF-like domain. Residues 323 to 343 (LIAAIIGAVQIAIIVAIVMCI) form a helical membrane-spanning segment. Topologically, residues 344-372 (TRKCPKNNRGRRQKQNLGHFTSDTSSRMV) are cytoplasmic. A disordered region spans residues 351–372 (NRGRRQKQNLGHFTSDTSSRMV). Positions 358–372 (QNLGHFTSDTSSRMV) are enriched in polar residues.

The protein belongs to the tomoregulin family. As to quaternary structure, may interact with ST14. As to expression, maily expressed in neurons. Expressed in brain, neurointermediate lobe, pars distalis, pancreas, ovary and testis.

It is found in the cell membrane. Its function is as follows. Neuron-specific restriction factor that prevents herpes simplex virus 1 (HHV-1) infection in the brain by blocking viral entry. Also able to restrict herpes simplex virus 2 (HHV-2) infection, although to a lesser extent. Acts by preventing the association between the viral glycoprotein D (gD) and its cell surface receptor NECTIN1, thereby inhibiting fusion of the virus and the cell membrane. Also able to prevent the association between the viral glycoprotein B (gB) and MYH9/NMMHC-IIA and MYH10/NMMHC-IIB receptors. This Mus musculus (Mouse) protein is Tomoregulin-1.